The primary structure comprises 42 residues: Photosystem II reaction center protein J (42 aa).

Residues 10–30 (IPLWLVGTVAGILVLGLVGLF) form a helical membrane-spanning segment.

This sequence belongs to the PsbJ family. As to quaternary structure, PSII is composed of 1 copy each of membrane proteins PsbA, PsbB, PsbC, PsbD, PsbE, PsbF, PsbH, PsbI, PsbJ, PsbK, PsbL, PsbM, PsbT, PsbX, PsbY, PsbZ, Psb30/Ycf12, at least 3 peripheral proteins of the oxygen-evolving complex and a large number of cofactors. It forms dimeric complexes.

It is found in the plastid. Its subcellular location is the chloroplast thylakoid membrane. Its function is as follows. One of the components of the core complex of photosystem II (PSII). PSII is a light-driven water:plastoquinone oxidoreductase that uses light energy to abstract electrons from H(2)O, generating O(2) and a proton gradient subsequently used for ATP formation. It consists of a core antenna complex that captures photons, and an electron transfer chain that converts photonic excitation into a charge separation. The chain is Photosystem II reaction center protein J from Staurastrum punctulatum (Green alga).